We begin with the raw amino-acid sequence, 2273 residues long: Acetyl-CoA carboxylase, mitochondrial (2273 aa).

Residues 1-104 (KGKTITHGQS…RGNIHKHTRL (104 aa)) constitute a mitochondrion transit peptide. Residues 134–635 (VISKILIANN…STGWLDDLIL (502 aa)) form the Biotin carboxylation domain. An ATP-grasp domain is found at 292–484 (KTNFVSVPDD…LPATQLQIAM (193 aa)). 332 to 337 (GGGGKG) provides a ligand contact to ATP. R459 is an active-site residue. Residues 763–837 (LEAELNPTQV…EAGDVIAKLT (75 aa)) form the Biotinyl-binding domain. Position 804 is an N6-biotinyllysine (K804). Residues 1532–1867 (PYSVKDWLQP…KRDMSPPLLE (336 aa)) form the CoA carboxyltransferase N-terminal domain. The carboxyltransferase stretch occupies residues 1532–2187 (PYSVKDWLQP…EGQVIKRLQK (656 aa)). R1776, K2080, and R2082 together coordinate CoA. The CoA carboxyltransferase C-terminal domain occupies 1871–2187 (RWDRDVDFKP…EGQVIKRLQK (317 aa)).

Biotin serves as cofactor.

It localises to the mitochondrion. It catalyses the reaction hydrogencarbonate + acetyl-CoA + ATP = malonyl-CoA + ADP + phosphate + H(+). The enzyme catalyses N(6)-biotinyl-L-lysyl-[protein] + hydrogencarbonate + ATP = N(6)-carboxybiotinyl-L-lysyl-[protein] + ADP + phosphate + H(+). It participates in lipid metabolism; malonyl-CoA biosynthesis; malonyl-CoA from acetyl-CoA: step 1/1. In terms of biological role, catalyzes the rate-limiting reaction in the mitochondrial fatty acid synthesis (FAS) type II pathway. Responsible for the production of the mitochondrial malonyl-CoA, used for the biosynthesis of the cofactor lipoic acid. This protein carries three functions: biotin carboxyl carrier protein, biotin carboxylase, and carboxyltransferase. This is Acetyl-CoA carboxylase, mitochondrial (HFA1) from Saccharomyces cerevisiae (strain Lalvin EC1118 / Prise de mousse) (Baker's yeast).